A 743-amino-acid polypeptide reads, in one-letter code: NAD(P)H-quinone oxidoreductase subunit 5, chloroplastic (743 aa).

14 helical membrane-spanning segments follow: residues 9 to 29 (WIIPFVPLPVPMLIGVGLLLF), 40 to 60 (WAFHSVLLLSIVMIFSIDLSI), 89 to 109 (IDPLTSIMLILITTVGIMVLI), 125 to 145 (FAYMSFFSTSMLGLVTSSNLI), 147 to 167 (IYIFWELVGMCSYLLIGFWFT), 184 to 204 (IGDLGLLLGILGFYWITGSFE), 219 to 239 (NEVNLVFLTICAVLLFAGAVA), 258 to 278 (TPISALIHAATMVAAGIFLVA), 280 to 300 (LLPLFIVIPYILNLISFIGII), 396 to 416 (TAFFLGTLSLCGIPPLACFWS), 425 to 445 (WLYSPIFAIIACSTAGLTAFY), 548 to 568 (LLPLLVLVLFTLFVGAIGIPF), 607 to 627 (IFSVSIAYFGIVIASFLYKPV), and 723 to 743 (YLFLYLSYVSIFLLIYYFLNL).

This sequence belongs to the complex I subunit 5 family. NDH is composed of at least 16 different subunits, 5 of which are encoded in the nucleus.

The protein resides in the plastid. It is found in the chloroplast thylakoid membrane. The catalysed reaction is a plastoquinone + NADH + (n+1) H(+)(in) = a plastoquinol + NAD(+) + n H(+)(out). It carries out the reaction a plastoquinone + NADPH + (n+1) H(+)(in) = a plastoquinol + NADP(+) + n H(+)(out). Its function is as follows. NDH shuttles electrons from NAD(P)H:plastoquinone, via FMN and iron-sulfur (Fe-S) centers, to quinones in the photosynthetic chain and possibly in a chloroplast respiratory chain. The immediate electron acceptor for the enzyme in this species is believed to be plastoquinone. Couples the redox reaction to proton translocation, and thus conserves the redox energy in a proton gradient. In Carpenteria californica (Tree anemone), this protein is NAD(P)H-quinone oxidoreductase subunit 5, chloroplastic (ndhF).